The sequence spans 676 residues: Envelope glycoprotein (676 aa).

The N-terminal stretch at 1–32 is a signal peptide; that stretch reads MGVTGILQLPRDRFKRTSFFLWVIILFQRTFS. Residues 33 to 650 lie on the Extracellular side of the membrane; it reads IPLGVIHNST…NDNWWTGWRQ (618 aa). Residue Asn-40 is glycosylated (N-linked (GlcNAc...) asparagine; by host). 5 disulfides stabilise this stretch: Cys-53–Cys-609, Cys-108–Cys-135, Cys-121–Cys-147, Cys-511–Cys-556, and Cys-601–Cys-608. The interval 54–201 is receptor-binding; sequence RDKLSSTNQL…DFFSSHPLRE (148 aa). Residues Asn-204, Asn-228, Asn-238, Asn-257, Asn-268, Asn-296, Asn-317, Asn-333, Asn-346, Asn-386, and Asn-413 are each glycosylated (N-linked (GlcNAc...) asparagine; by host). The tract at residues 305–485 is mucin-like region; it reads ELSFTVVSNG…SGKLGLITNT (181 aa). Residues 315–335 are compositionally biased toward polar residues; the sequence is AKNISGQSPARTSSDPGTNTT. A disordered region spans residues 315-337; it reads AKNISGQSPARTSSDPGTNTTTE. Over residues 373–391 the composition is skewed to polar residues; sequence TSPQSLTTKPGPDNSTHNT. Disordered regions lie at residues 373-392 and 402-479; these read TSPQ…HNTP and TQVE…SGKL. Positions 414 to 432 are enriched in low complexity; sequence DSTASDTPSATTAAGPPKA. Residues 433-464 show a composition bias toward polar residues; sequence ENTNTSKSTDFLDPATTTSPQNHSETAGNNNT. Residues Asn-436, Asn-454, and Asn-462 are each glycosylated (N-linked (GlcNAc...) asparagine; by host). Residues 524–539 form a fusion peptide region; it reads GAAIGLAWIPYFGPAA. A coiled-coil region spans residues 554–595; the sequence is LICGLRQLANETTQALQLFLRATTELRTFSILNRKAIDFLLQ. Residue Asn-563 is glycosylated (N-linked (GlcNAc...) asparagine; by host). A coiled-coil region spans residues 615–634; the sequence is WTKNITDKIDQIIHDFVDKT. The N-linked (GlcNAc...) asparagine; by host glycan is linked to Asn-618. A helical membrane pass occupies residues 651 to 671; it reads WIPAGIGVTGVIIAVIALFCI. Positions 660–664 match the Important role for host BST2/tetherin antagonism motif; it reads GVIIA. Residues Cys-670 and Cys-672 are each lipidated (S-palmitoyl cysteine; by host). The Cytoplasmic segment spans residues 672–676; the sequence is CKFVF.

The protein belongs to the filoviruses glycoprotein family. As to quaternary structure, homotrimer; each monomer consists of a GP1 and a GP2 subunit linked by disulfide bonds. The resulting peplomers (GP1,2) protrude from the virus surface as spikes. Interacts with host integrin alpha-V/ITGAV. Interacts with host CLEC10A. Also binds to host CD209 and CLEC4M/DC-SIGN(R). Interacts with host FOLR1. Interacts with BST2; this interaction inhibits the antiviral effect of BST2 and this allows viral release from infected cells. Interacts with host FCN1; this interaction enhances viral entry. Interacts with host TLR4; this interaction induces cell death in T-lymphocytes or proinflammatory cytokines and SOCS1 production in monocytes. Interacts with host entry receptor NPC1. In terms of assembly, GP1 and GP2delta are part of GP1,2delta soluble complexes released by ectodomain shedding. In terms of processing, the signal peptide region modulates GP's high mannose glycosylation, thereby determining the efficiency of the interactions with DC-SIGN(R). N-glycosylated. Post-translationally, glycosylated; glycosylation is essential for the activation of dendritic cells and macrophages. In terms of processing, O-glycosylated in the mucin-like region. Palmitoylation is not required for its function. Post-translationally, specific enzymatic cleavages in vivo yield mature proteins. The precursor is processed into GP1 and GP2 by host cell furin in the trans Golgi, and maybe by other host proteases, to yield the mature GP1 and GP2 proteins. The cleavage site corresponds to the furin optimal cleavage sequence [KR]-X-[KR]-R. This cleavage does not seem to be required for function. After the internalization of the virus into cell endosomes, GP1 C-terminus is removed by the endosomal proteases cathepsin B, cathepsin L, or both, leaving a 19-kDa N-terminal fragment which is further digested by cathepsin B. This cleaved 19-kDa GP1 can then bind to the host entry receptor NPC1. Proteolytic processing of GP1,2 by host ADAM17 can remove the transmembrane anchor of GP2 and leads to shedding of complexes consisting in GP1 and truncated GP2 (GP1,2delta).

Its subcellular location is the virion membrane. The protein localises to the host cell membrane. It localises to the secreted. Its function is as follows. Trimeric GP1,2 complexes form the virion surface spikes and mediate the viral entry processes, with GP1 acting as the receptor-binding subunit and GP2 as the membrane fusion subunit. At later times of infection, down-regulates the expression of various host cell surface molecules that are essential for immune surveillance and cell adhesion. Down-modulates several integrins including ITGA1, ITGA2, ITGA3, ITGA4, ITGA5, ITGA6, ITGAV and ITGB1. This decrease in cell adhesion molecules may lead to cell detachment, contributing to the disruption of blood vessel integrity and hemorrhages developed during infection (cytotoxicity). Interacts with host TLR4 and thereby stimulates the differentiation and activation of monocytes leading to bystander death of T-lymphocytes. Down-regulates as well the function of host natural killer cells. Counteracts the antiviral effect of host BST2/tetherin that restricts release of progeny virions from infected cells. However, cooperates with VP40 and host BST2 to activate canonical NF-kappa-B pathway in a manner dependent on neddylation. Functions as a decoy for anti-GP1,2 antibodies thereby contributing to viral immune evasion. Interacts and activates host macrophages and dendritic cells inducing up-regulation of cytokine transcription. This effect is mediated throught activation of host TLR4. In terms of biological role, responsible for binding to the receptor(s) on target cells. Interacts with CD209/DC-SIGN and CLEC4M/DC-SIGNR which act as cofactors for virus entry into dendritic cells (DCs) and endothelial cells. Binding to the macrophage specific lectin CLEC10A also seems to enhance virus infectivity. Interaction with FOLR1/folate receptor alpha may be a cofactor for virus entry in some cell types, although results are contradictory. Members of the Tyro3 receptor tyrosine kinase family also seem to be cell entry factors in filovirus infection. Once attached, the virions are internalized through clathrin-dependent endocytosis and/or macropinocytosis. After internalization of the virus into the endosomes of the host cell, proteolysis of GP1 by two cysteine proteases, CTSB/cathepsin B and CTSL/cathepsin L removes the glycan cap and allows GP1 binding to the host entry receptor NPC1. NPC1-binding, Ca(2+) and acidic pH induce a conformational change of GP2, which unmasks its fusion peptide and permit membranes fusion. Functionally, acts as a class I viral fusion protein. Under the current model, the protein has at least 3 conformational states: pre-fusion native state, pre-hairpin intermediate state, and post-fusion hairpin state. During viral and target cell membrane fusion, the coiled coil regions (heptad repeats) assume a trimer-of-hairpins structure, positioning the fusion peptide in close proximity to the C-terminal region of the ectodomain. The formation of this structure appears to drive apposition and subsequent fusion of viral and target cell membranes. Responsible for penetration of the virus into the cell cytoplasm by mediating the fusion of the membrane of the endocytosed virus particle with the endosomal membrane. Low pH in endosomes induces an irreversible conformational change in GP2, releasing the fusion hydrophobic peptide. The sequence is that of Envelope glycoprotein (GP) from Epomops franqueti (Franquet's epauletted fruit bat).